The chain runs to 451 residues: NAC domain containing protein 52 (451 aa).

Residues 1–21 (MGRESVAVVTAPPSATAPGTA) form a disordered region. One can recognise an NAC domain in the interval 27 to 178 (LAPGFRFHPT…AYVLCRVFHK (152 aa)). The DNA-binding element occupies 126–184 (LGMKKTLVFHSGRAPDGLRTNWVMHEYRLVEYETEKNGNLVQDAYVLCRVFHKNNIGPP). Disordered stretches follow at residues 255 to 337 (DQQN…TTTT) and 370 to 400 (KKEKPQQPLRPHKEPLPPQTPLASPEEKVND). A compositionally biased stretch (basic and acidic residues) spans 256 to 270 (QQNHHENDLKPEEHN). Residues 272–292 (NNNYDENEETLKREQMEEEER) adopt a coiled-coil conformation. A compositionally biased stretch (low complexity) spans 318 to 337 (ESNNNSSRNTQDHCSSTTTT). Basic and acidic residues predominate over residues 370–384 (KKEKPQQPLRPHKEP). Residues 398–446 (VNDLQKEIHQMSVERETFKLEMMSAEAMISILQSRIDALRQENEELKKN) are a coiled coil.

As to quaternary structure, interacts with JMJ14 and NAC050. In terms of tissue distribution, mostly expressed in floral organs, and, at low levels, in other organs.

It is found in the nucleus. Its function is as follows. Transcriptional repressor that binds to the motif 5'-(C/T)A(C/A)G-3' in the promoter of target genes. Also binds to the 5'-CTTGNNNNNCAAG-3' consensus sequence in chromatin. Can bind to the mitochondrial dysfunction motif (MDM) present in the upstream regions of mitochondrial dysfunction stimulon (MDS) genes involved in mitochondrial retrograde regulation (MRR). Together with NAC050 and JMJ14, regulates gene expression and flowering time by associating with the histone demethylase JMJ14, probably by the promotion of RNA-mediated gene silencing. Regulates siRNA-dependent post-transcriptional gene silencing (PTGS) through SGS3 expression modulation. Required during pollen development. In Arabidopsis thaliana (Mouse-ear cress), this protein is NAC domain containing protein 52.